Here is a 221-residue protein sequence, read N- to C-terminus: Mitochondrial cardiolipin hydrolase (221 aa).

Topologically, residues 1–4 (MGRS) are mitochondrial intermembrane. Residues 1-38 (MGRSSWRLVFAAGAGLALALEALPWLMRWLLAGRRPRR) form a required for mitochondrial localization region. Residues 5–27 (SWRLVFAAGAGLALALEALPWLM) form a helical membrane-spanning segment. Residues 28-221 (RWLLAGRRPR…SFFPQKHRGH (194 aa)) lie on the Cytoplasmic side of the membrane. The C3H1-type; atypical zinc finger occupies 44–75 (PSQVTCTEALLQAPGLPPGPSGCPCSLPHSES). The 28-residue stretch at 148–175 (DLGYMHHKFAIVDKKVLITGSLNWTTQA) folds into the PLD phosphodiesterase domain. Residues His153, Lys155, and Asp160 contribute to the active site.

The protein belongs to the phospholipase D family. MitoPLD/Zucchini subfamily. Homodimer. Interacts with MOV10L1. Interacts with MIGA1 and MIGA2; possibly facilitating homodimer formation. Interacts with GK2. Predominantly expressed in testis (at protein level) and in growing ovary. Also expressed in the brain, eye and urinary bladder (at protein level), but its levels were low or undetectable in other organs.

It localises to the mitochondrion outer membrane. The protein localises to the nucleus membrane. The protein resides in the cell membrane. Its subcellular location is the golgi apparatus. The catalysed reaction is a cardiolipin + H2O = a 1,2-diacyl-sn-glycero-3-phospho-(1'-sn-glycerol) + a 1,2-diacyl-sn-glycero-3-phosphate + H(+). With respect to regulation, single stranded DNA (ssDNA) hydrolase activity does not depend upon, but is stimulated by the presence of Ca(2+) and Mn(2+). MIGA1 and MIGA2 increase PLD6 self-association affinity and affects the homodimer conformation facilitating its phospholipase activity over the nuclease activity. MYC induces its expression and stimulates its phospholipase activity. Presents phospholipase and nuclease activities, depending on the different physiological conditions. Interaction with Mitoguardin (MIGA1 or MIGA2) affects the dimer conformation, facilitating the lipase activity over the nuclease activity. Plays a key role in mitochondrial fusion and fission via its phospholipase activity. In its phospholipase role, it uses the mitochondrial lipid cardiolipin as substrate to generate phosphatidate (PA or 1,2-diacyl-sn-glycero-3-phosphate), a second messenger signaling lipid. Production of PA facilitates Mitofusin-mediated fusion, whereas the cleavage of PA by the Lipin family of phosphatases produces diacylgycerol (DAG) which promotes mitochondrial fission. Both Lipin and DAG regulate mitochondrial dynamics and membrane fusion/fission, important processes for adapting mitochondrial metabolism to changes in cell physiology. Mitochondrial fusion enables cells to cope with the increased nucleotide demand during DNA synthesis. Mitochondrial function and dynamics are closely associated with biological processes such as cell growth, proliferation, and differentiation. Mediator of MYC activity, promotes mitochondrial fusion and activates AMPK which in turn inhibits YAP/TAZ, thereby inducing cell growth and proliferation. The endonuclease activity plays a critical role in PIWI-interacting RNA (piRNA) biogenesis during spermatogenesis. Implicated in spermatogenesis and sperm fertility in testicular germ cells, its single strand-specific nuclease activity is critical for the biogenesis/maturation of PIWI-interacting RNA (piRNA). MOV10L1 selectively binds to piRNA precursors and funnels them to the endonuclease that catalyzes the first cleavage step of piRNA processing to generate piRNA intermediate fragments that are subsequently loaded to Piwi proteins. Cleaves either DNA or RNA substrates with similar affinity, producing a 5' phosphate end, in this way it participates in the processing of primary piRNA transcripts. piRNAs provide essential protection against the activity of mobile genetic elements. piRNA-mediated transposon silencing is thus critical for maintaining genome stability, in particular in germline cells when transposons are mobilized as a consequence of wide-spread genomic demethylation. PA may act as signaling molecule in the recognition/transport of the precursor RNAs of primary piRNAs. Interacts with tesmin in testes, suggesting a role in spermatogenesis via association with its interacting partner. This Mus musculus (Mouse) protein is Mitochondrial cardiolipin hydrolase (Pld6).